The sequence spans 276 residues: Large ribosomal subunit protein uL2 (276 aa).

The segment at 221 to 276 (RGSAMNPNDHPHGGGEGRAPIGRKSPMTPWGKKARGVKTRDRKKASNALIIRRRKK) is disordered. Over residues 252–276 (KKARGVKTRDRKKASNALIIRRRKK) the composition is skewed to basic residues.

The protein belongs to the universal ribosomal protein uL2 family. As to quaternary structure, part of the 50S ribosomal subunit. Forms a bridge to the 30S subunit in the 70S ribosome.

One of the primary rRNA binding proteins. Required for association of the 30S and 50S subunits to form the 70S ribosome, for tRNA binding and peptide bond formation. It has been suggested to have peptidyltransferase activity; this is somewhat controversial. Makes several contacts with the 16S rRNA in the 70S ribosome. The protein is Large ribosomal subunit protein uL2 of Aster yellows witches'-broom phytoplasma (strain AYWB).